A 166-amino-acid polypeptide reads, in one-letter code: NAD(P)H-quinone oxidoreductase subunit I, chloroplastic (166 aa).

2 consecutive 4Fe-4S ferredoxin-type domains span residues 55–84 (GRIH…VDWK) and 95–124 (LNYS…MTEE). [4Fe-4S] cluster contacts are provided by Cys-64, Cys-67, Cys-70, Cys-74, Cys-104, Cys-107, Cys-110, and Cys-114.

The protein belongs to the complex I 23 kDa subunit family. In terms of assembly, NDH is composed of at least 16 different subunits, 5 of which are encoded in the nucleus. [4Fe-4S] cluster is required as a cofactor.

The protein resides in the plastid. Its subcellular location is the chloroplast thylakoid membrane. It carries out the reaction a plastoquinone + NADH + (n+1) H(+)(in) = a plastoquinol + NAD(+) + n H(+)(out). It catalyses the reaction a plastoquinone + NADPH + (n+1) H(+)(in) = a plastoquinol + NADP(+) + n H(+)(out). In terms of biological role, NDH shuttles electrons from NAD(P)H:plastoquinone, via FMN and iron-sulfur (Fe-S) centers, to quinones in the photosynthetic chain and possibly in a chloroplast respiratory chain. The immediate electron acceptor for the enzyme in this species is believed to be plastoquinone. Couples the redox reaction to proton translocation, and thus conserves the redox energy in a proton gradient. This Ambrosia trifida (Giant ragweed) protein is NAD(P)H-quinone oxidoreductase subunit I, chloroplastic.